Reading from the N-terminus, the 883-residue chain is DNA mismatch repair protein MutS (883 aa).

Positions 1–25 (MSDSVAPDVPVIREGKNPAQHRDRT) are disordered. Over residues 11-25 (VIREGKNPAQHRDRT) the composition is skewed to basic and acidic residues. Residue 664 to 671 (GPNASGKS) participates in ATP binding. The tract at residues 857 to 883 (RKGNTQPRARKSSAETEAKTQQFELPF) is disordered.

The protein belongs to the DNA mismatch repair MutS family.

Functionally, this protein is involved in the repair of mismatches in DNA. It is possible that it carries out the mismatch recognition step. This protein has a weak ATPase activity. In Acaryochloris marina (strain MBIC 11017), this protein is DNA mismatch repair protein MutS.